The primary structure comprises 581 residues: Arginine--tRNA ligase (581 aa).

Positions 126-136 (PNLAKEMHVGH) match the 'HIGH' region motif.

It belongs to the class-I aminoacyl-tRNA synthetase family. As to quaternary structure, monomer.

The protein resides in the cytoplasm. The enzyme catalyses tRNA(Arg) + L-arginine + ATP = L-arginyl-tRNA(Arg) + AMP + diphosphate. In Shewanella piezotolerans (strain WP3 / JCM 13877), this protein is Arginine--tRNA ligase.